The chain runs to 340 residues: Alcohol dehydrogenase patD (340 aa).

Cysteine 46 serves as a coordination point for Zn(2+). NAD(+) is bound at residue histidine 47. Positions 67, 68, 101, 104, 112, and 154 each coordinate Zn(2+). Histidine 67 provides a ligand contact to substrate. NAD(+)-binding positions include 178–183 (GLGGLG), 198–203 (VALSRD), lysine 206, 265–267 (LSI), 289–291 (PSG), and 297–299 (EDA).

This sequence belongs to the zinc-containing alcohol dehydrogenase family. Zn(2+) is required as a cofactor.

It is found in the cytoplasm. Its subcellular location is the cytosol. The catalysed reaction is neopatulin + NADPH + H(+) = (E)-ascladiol + NADP(+). Its pathway is mycotoxin biosynthesis; patulin biosynthesis. Its function is as follows. Alcohol dehydrogenase; part of the gene cluster that mediates the biosynthesis of patulin, an acetate-derived tetraketide mycotoxin produced by several fungal species that shows antimicrobial properties against several bacteria. PatD catalyzes the conversion of neopatulin into E-ascladiol. The pathway begins with the synthesis of 6-methylsalicylic acid by the polyketide synthase (PKS) patK via condensation of acetate and malonate units. The 6-methylsalicylic acid decarboxylase patG then catalyzes the decarboxylation of 6-methylsalicylic acid to yield m-cresol (also known as 3-methylphenol). These first reactions occur in the cytosol. The intermediate m-cresol is then transported into the endoplasmic reticulum where the cytochrome P450 monooxygenase patH converts it to m-hydroxybenzyl alcohol, which is further converted to gentisyl alcohol by the cytochrome P450 monooxygenase patI. The oxidoreductases patJ and patO further convert gentisyl alcohol to isoepoxydon in the vacuole. PatN catalyzes then the transformation of isoepoxydon into phyllostine. The cluster protein patF is responsible for the conversion from phyllostine to neopatulin whereas the alcohol dehydrogenase patD converts neopatulin to E-ascladiol. The steps between isoepoxydon and E-ascladiol occur in the cytosol, and E-ascladiol is probably secreted to the extracellular space by one of the cluster-specific transporters patC or patM. Finally, the secreted patulin synthase patE catalyzes the conversion of E-ascladiol to patulin. In Penicillium expansum (Blue mold rot fungus), this protein is Alcohol dehydrogenase patD.